The following is a 211-amino-acid chain: Superoxide dismutase [Fe] (211 aa).

Fe cation-binding residues include histidine 34, histidine 85, aspartate 171, and histidine 175.

It belongs to the iron/manganese superoxide dismutase family. Fe cation serves as cofactor.

The enzyme catalyses 2 superoxide + 2 H(+) = H2O2 + O2. Its function is as follows. Destroys superoxide anion radicals which are normally produced within the cells and which are toxic to biological systems. In Acidianus ambivalens (Desulfurolobus ambivalens), this protein is Superoxide dismutase [Fe] (sod).